The chain runs to 283 residues: Homeobox protein BarH-like 2 (283 aa).

Disordered stretches follow at residues Ala107–Arg141 and Lys198–Ser283. The span at Ser122–Pro132 shows a compositional bias: polar residues. Residues Arg139 to Lys198 constitute a DNA-binding region (homeobox). Positions Gln268–Ser277 are enriched in low complexity.

This sequence belongs to the BAR homeobox family. As to expression, nervous system, particularly in the telencephalon, spinal cord, and dorsal root ganglia.

Its subcellular location is the nucleus. Transcription factor. Binds optimally to the DNA consensus sequence 5'-YYTAATGRTTTTY-3'. May control the expression of neural adhesion molecules such as L1 or Ng-CAM during embryonic development of both the central and peripherical nervous system. May be involved in controlling adhesive processes in keratinizing epithelia. The sequence is that of Homeobox protein BarH-like 2 (Barx2) from Mus musculus (Mouse).